The following is a 208-amino-acid chain: Pyridoxine/pyridoxamine 5'-phosphate oxidase (208 aa).

FMN is bound by residues 53-58 (RTVLLK), 68-69 (YS), K75, and Q100. K58 contacts substrate. The substrate site is built by Y118, R122, and S126. Residues 135-136 (QS) and W180 contribute to the FMN site. Substrate is bound at residue 186–188 (RLH). R190 is a binding site for FMN.

The protein belongs to the pyridoxamine 5'-phosphate oxidase family. As to quaternary structure, homodimer. The cofactor is FMN.

The catalysed reaction is pyridoxamine 5'-phosphate + O2 + H2O = pyridoxal 5'-phosphate + H2O2 + NH4(+). It carries out the reaction pyridoxine 5'-phosphate + O2 = pyridoxal 5'-phosphate + H2O2. Its pathway is cofactor metabolism; pyridoxal 5'-phosphate salvage; pyridoxal 5'-phosphate from pyridoxamine 5'-phosphate: step 1/1. The protein operates within cofactor metabolism; pyridoxal 5'-phosphate salvage; pyridoxal 5'-phosphate from pyridoxine 5'-phosphate: step 1/1. Functionally, catalyzes the oxidation of either pyridoxine 5'-phosphate (PNP) or pyridoxamine 5'-phosphate (PMP) into pyridoxal 5'-phosphate (PLP). This is Pyridoxine/pyridoxamine 5'-phosphate oxidase from Xylella fastidiosa (strain 9a5c).